We begin with the raw amino-acid sequence, 205 residues long: Small ribosomal subunit protein uS4 (205 aa).

An S4 RNA-binding domain is found at 94-154 (SRLDNSVYRA…TRKDGKIRKN (61 aa)).

The protein belongs to the universal ribosomal protein uS4 family. Part of the 30S ribosomal subunit. Contacts protein S5. The interaction surface between S4 and S5 is involved in control of translational fidelity.

One of the primary rRNA binding proteins, it binds directly to 16S rRNA where it nucleates assembly of the body of the 30S subunit. In terms of biological role, with S5 and S12 plays an important role in translational accuracy. This Mesomycoplasma hyopneumoniae (strain 232) (Mycoplasma hyopneumoniae) protein is Small ribosomal subunit protein uS4.